Reading from the N-terminus, the 396-residue chain is Phosphopentomutase (396 aa).

Residues Asp-13, Asp-288, His-293, Asp-329, His-330, and His-341 each coordinate Mn(2+).

The protein belongs to the phosphopentomutase family. The cofactor is Mn(2+).

The protein localises to the cytoplasm. The catalysed reaction is 2-deoxy-alpha-D-ribose 1-phosphate = 2-deoxy-D-ribose 5-phosphate. The enzyme catalyses alpha-D-ribose 1-phosphate = D-ribose 5-phosphate. It participates in carbohydrate degradation; 2-deoxy-D-ribose 1-phosphate degradation; D-glyceraldehyde 3-phosphate and acetaldehyde from 2-deoxy-alpha-D-ribose 1-phosphate: step 1/2. Its function is as follows. Isomerase that catalyzes the conversion of deoxy-ribose 1-phosphate (dRib-1-P) and ribose 1-phosphate (Rib-1-P) to deoxy-ribose 5-phosphate (dRib-5-P) and ribose 5-phosphate (Rib-5-P), respectively. The protein is Phosphopentomutase of Clostridium perfringens (strain SM101 / Type A).